The chain runs to 295 residues: Urease accessory protein UreD (295 aa).

The protein belongs to the UreD family. UreD, UreF and UreG form a complex that acts as a GTP-hydrolysis-dependent molecular chaperone, activating the urease apoprotein by helping to assemble the nickel containing metallocenter of UreC. The UreE protein probably delivers the nickel.

The protein localises to the cytoplasm. Its function is as follows. Required for maturation of urease via the functional incorporation of the urease nickel metallocenter. In Saccharophagus degradans (strain 2-40 / ATCC 43961 / DSM 17024), this protein is Urease accessory protein UreD.